The sequence spans 106 residues: Iron-sulfur cluster assembly protein CyaY (106 aa).

Belongs to the frataxin family.

Its function is as follows. Involved in iron-sulfur (Fe-S) cluster assembly. May act as a regulator of Fe-S biogenesis. In Yersinia pseudotuberculosis serotype O:3 (strain YPIII), this protein is Iron-sulfur cluster assembly protein CyaY.